Reading from the N-terminus, the 156-residue chain is Putative type II restriction enzyme ApeKORF2002P (156 aa).

The protein to M.jannaschii MJ1199.

It catalyses the reaction Endonucleolytic cleavage of DNA to give specific double-stranded fragments with terminal 5'-phosphates.. Functionally, a putative type II restriction enzyme, its methylase would be APE_2002. The polypeptide is Putative type II restriction enzyme ApeKORF2002P (Aeropyrum pernix (strain ATCC 700893 / DSM 11879 / JCM 9820 / NBRC 100138 / K1)).